Here is a 244-residue protein sequence, read N- to C-terminus: 3-deoxy-manno-octulosonate cytidylyltransferase (244 aa).

This sequence belongs to the KdsB family.

The protein localises to the cytoplasm. The enzyme catalyses 3-deoxy-alpha-D-manno-oct-2-ulosonate + CTP = CMP-3-deoxy-beta-D-manno-octulosonate + diphosphate. It participates in nucleotide-sugar biosynthesis; CMP-3-deoxy-D-manno-octulosonate biosynthesis; CMP-3-deoxy-D-manno-octulosonate from 3-deoxy-D-manno-octulosonate and CTP: step 1/1. The protein operates within bacterial outer membrane biogenesis; lipopolysaccharide biosynthesis. Activates KDO (a required 8-carbon sugar) for incorporation into bacterial lipopolysaccharide in Gram-negative bacteria. This is 3-deoxy-manno-octulosonate cytidylyltransferase from Synechococcus elongatus (strain ATCC 33912 / PCC 7942 / FACHB-805) (Anacystis nidulans R2).